We begin with the raw amino-acid sequence, 309 residues long: UDP-N-acetylenolpyruvoylglucosamine reductase (309 aa).

In terms of domain architecture, FAD-binding PCMH-type spans 34–221; it reads RVGGPAQVLF…TAAREAAQPI (188 aa). The active site involves Arg179. The Proton donor role is filled by Ser228. Residue Glu298 is part of the active site.

This sequence belongs to the MurB family. FAD serves as cofactor.

Its subcellular location is the cytoplasm. It catalyses the reaction UDP-N-acetyl-alpha-D-muramate + NADP(+) = UDP-N-acetyl-3-O-(1-carboxyvinyl)-alpha-D-glucosamine + NADPH + H(+). It functions in the pathway cell wall biogenesis; peptidoglycan biosynthesis. Its function is as follows. Cell wall formation. In Methylorubrum populi (strain ATCC BAA-705 / NCIMB 13946 / BJ001) (Methylobacterium populi), this protein is UDP-N-acetylenolpyruvoylglucosamine reductase.